The sequence spans 100 residues: Small ribosomal subunit protein uS14 (100 aa).

Belongs to the universal ribosomal protein uS14 family. As to quaternary structure, part of the 30S ribosomal subunit. Contacts proteins S3 and S10.

Its function is as follows. Binds 16S rRNA, required for the assembly of 30S particles and may also be responsible for determining the conformation of the 16S rRNA at the A site. This chain is Small ribosomal subunit protein uS14, found in Synechococcus sp. (strain RCC307).